The sequence spans 481 residues: MKVLSEGQLKLCVVQPVHLTSWLLIFFILKSISCLKPARLPIYQRKPFIAAWNAPTDQCLIKYNLRLNLKMFPVIGSPLAKARGQNVTIFYVNRLGYYPWYTSQGVPINGGLPQNISLQVHLEKADQDINYYIPAEDFSGLAVIDWEYWRPQWARNWNSKDVYRQKSRKLISDMGKNVSATDIEYLAKVTFEESAKAFMKETIKLGIKSRPKGLWGYYLYPDCHNYNVYAPNYSGSCPEDEVLRNNELSWLWNSSAALYPSIGVWKSLGDSENILRFSKFRVHESMRISTMTSHDYALPVFVYTRLGYRDEPLFFLSKQDLVSTIGESAALGAAGIVIWGDMNLTASKANCTKVKQFVSSDLGSYIANVTRAAEVCSLHLCRNNGRCIRKMWNAPSYLHLNPASYHIEASEDGEFTVKGKASDTDLAVMADTFSCHCYQGYEGADCREIKTADGCSGVSPSPGSLMTLCLLLLASYRSIQL.

The Cytoplasmic segment spans residues 1–8 (MKVLSEGQ). A helical transmembrane segment spans residues 9 to 29 (LKLCVVQPVHLTSWLLIFFIL). The Extracellular portion of the chain corresponds to 30–453 (KSISCLKPAR…ADCREIKTAD (424 aa)). 5 cysteine pairs are disulfide-bonded: C59/C351, C223/C237, C376/C387, C381/C435, and C437/C446. Residues N86 and N115 are each glycosylated (N-linked (GlcNAc...) asparagine). The active-site Proton donor is the E147. N177 is a glycosylation site (N-linked (GlcNAc...) (complex) asparagine). N-linked (GlcNAc...) asparagine glycosylation is present at N343. Residues 454-474 (GCSGVSPSPGSLMTLCLLLLA) traverse the membrane as a helical segment. The Cytoplasmic portion of the chain corresponds to 475–481 (SYRSIQL).

This sequence belongs to the glycosyl hydrolase 56 family. Detected in placenta and skeletal muscle.

It is found in the membrane. It catalyses the reaction Random hydrolysis of (1-&gt;4)-linkages between N-acetyl-beta-D-glucosamine and D-glucuronate residues in hyaluronate.. Functionally, endo-hyaluronidase that degrades hyaluronan to smaller oligosaccharide fragments. Also has chondroitin sulfate hydrolase activity, The best substrate being the galactosaminidic linkage in the sequence of a trisulfated tetrasaccharide. The chain is Hyaluronidase-4 (HYAL4) from Homo sapiens (Human).